A 425-amino-acid polypeptide reads, in one-letter code: Tyrosine--tRNA ligase (425 aa).

Tyrosine 37 provides a ligand contact to L-tyrosine. A 'HIGH' region motif is present at residues 42–51 (PTADSLHLGH). Residues tyrosine 175 and glutamine 179 each contribute to the L-tyrosine site. Positions 235 to 239 (KFGKT) match the 'KMSKS' region motif. ATP is bound at residue lysine 238. In terms of domain architecture, S4 RNA-binding spans 357–415 (QDLQQALVNAELAPSRGQARKLIEAKSVSINGSLQTDAEYTFGEDDRLFGQYTLLRRGK).

It belongs to the class-I aminoacyl-tRNA synthetase family. TyrS type 1 subfamily. Homodimer.

The protein localises to the cytoplasm. It catalyses the reaction tRNA(Tyr) + L-tyrosine + ATP = L-tyrosyl-tRNA(Tyr) + AMP + diphosphate + H(+). Catalyzes the attachment of tyrosine to tRNA(Tyr) in a two-step reaction: tyrosine is first activated by ATP to form Tyr-AMP and then transferred to the acceptor end of tRNA(Tyr). The polypeptide is Tyrosine--tRNA ligase (Erwinia tasmaniensis (strain DSM 17950 / CFBP 7177 / CIP 109463 / NCPPB 4357 / Et1/99)).